We begin with the raw amino-acid sequence, 120 residues long: Fluoride-specific ion channel FluC (120 aa).

3 helical membrane passes run 30–50 (FGTL…YGLL), 66–86 (VGFL…LLLL), and 96–116 (LNII…LQLV). 2 residues coordinate Na(+): Gly70 and Thr73.

Belongs to the fluoride channel Fluc/FEX (TC 1.A.43) family.

The protein localises to the cell inner membrane. The catalysed reaction is fluoride(in) = fluoride(out). Na(+) is not transported, but it plays an essential structural role and its presence is essential for fluoride channel function. Its function is as follows. Fluoride-specific ion channel. Important for reducing fluoride concentration in the cell, thus reducing its toxicity. The chain is Fluoride-specific ion channel FluC from Pseudoalteromonas translucida (strain TAC 125).